The following is a 109-amino-acid chain: Large ribosomal subunit protein uL22 (109 aa).

Belongs to the universal ribosomal protein uL22 family. Part of the 50S ribosomal subunit.

Functionally, this protein binds specifically to 23S rRNA; its binding is stimulated by other ribosomal proteins, e.g. L4, L17, and L20. It is important during the early stages of 50S assembly. It makes multiple contacts with different domains of the 23S rRNA in the assembled 50S subunit and ribosome. Its function is as follows. The globular domain of the protein is located near the polypeptide exit tunnel on the outside of the subunit, while an extended beta-hairpin is found that lines the wall of the exit tunnel in the center of the 70S ribosome. This chain is Large ribosomal subunit protein uL22, found in Dechloromonas aromatica (strain RCB).